A 188-amino-acid polypeptide reads, in one-letter code: HGPRTase-like protein (188 aa).

The protein belongs to the purine/pyrimidine phosphoribosyltransferase family. Archaeal HPRT subfamily.

Functionally, may catalyze a purine salvage reaction, the substrate is unknown. The chain is HGPRTase-like protein from Halobacterium salinarum (strain ATCC 29341 / DSM 671 / R1).